We begin with the raw amino-acid sequence, 356 residues long: Tyrosine recombinase XerS (356 aa).

Residues 16–121 (IMPWYVLDYY…ALSSLYKYLT (106 aa)) enclose the Core-binding (CB) domain. The region spanning 169-354 (AFLDYVDKEY…VNDEQKNALD (186 aa)) is the Tyr recombinase domain. Residues R210, K234, H306, R309, and H332 contribute to the active site. The active-site O-(3'-phospho-DNA)-tyrosine intermediate is Y341.

It belongs to the 'phage' integrase family. XerS subfamily.

The protein resides in the cytoplasm. FtsK is required for recombination. Functionally, site-specific tyrosine recombinase, which acts by catalyzing the cutting and rejoining of the recombining DNA molecules. Essential to convert dimers of the bacterial chromosome into monomers to permit their segregation at cell division. This is Tyrosine recombinase XerS from Streptococcus equi subsp. zooepidemicus (strain H70).